Reading from the N-terminus, the 70-residue chain is uncharacterized protein (70 aa).

This is an uncharacterized protein from Escherichia coli O157:H7.